A 113-amino-acid polypeptide reads, in one-letter code: Protein ORF3 (113 aa).

Hydrophobic regions lie at residues 1-21 and 32-52; these read MGSPCALGLFCCCSSCFCLCC and AVVGGAAAVPAVVSGVTGLIL. The interaction with host HPX stretch occupies residues 27–67; the sequence is ASRLAAVVGGAAAVPAVVSGVTGLILSPSPSPIFIQPTPSP. An interaction with the capsid protein region spans residues 47–71; the sequence is VTGLILSPSPSPIFIQPTPSPPMSF. Residue serine 70 is modified to Phosphoserine; by host. Residues 71–113 form a homodimerization, and interaction with host AMBP/bikunin region; sequence FHNPGLELALDSRPAPLXPLGVTSPSAPPLPPVVDLPQLGLRR. Residues 90–113 form a disordered region; that stretch reads LGVTSPSAPPLPPVVDLPQLGLRR. Positions 94-103 are interaction with host SRC, HCK, FYN, PIK3R3 and GRB2; sequence SPSAPPLPPV. A PTAP/PSAP motif motif is present at residues 95 to 98; that stretch reads PSAP.

The protein belongs to the hepevirus ORF3 protein family. As to quaternary structure, forms homooligomers. Interacts with host SRC, HCK, FYN, PIK3R3 and GRB2 (via SH3 domain); binding does not activate the kinases. Interacts with host AMBP/bikunin and AMBP/alpha-1-microglobulin peptides. Interacts with host HPX/hemopexin. Interacts (when phosphorylated) with capsid protein ORF2. Interacts with host TSG101; this interaction plays a role in viral release from the host cell. Interacts with host SIRPA; this interaction down-regulates the phosphorylation of host IRF3. Post-translationally, palmitoylated in the N-terminus.

The protein localises to the host endoplasmic reticulum membrane. The protein resides in the host cytoplasm. It localises to the host cytoskeleton. Its subcellular location is the virion. It is found in the host cell membrane. Its function is as follows. Small multifunctional phosphoprotein involved in virion morphogenesis, egress and counteracting host innate immunity. Plays critical roles in the final steps of viral release by interacting with host TSG101, a member of the vacuolar protein-sorting pathway and using other cellular host proteins involved in vesicle formation pathway. Also acts as a viroporin and forms ion conductive pores allowing viral particle release. Impairs the generation of type I interferon by down-regulating host TLR3 and TLR7 as well as their downstream signaling pathways. Down-regulates the phosphorylation of host IRF3 via the interaction with host SIRP-alpha, thereby inhibiting IFN-I expression. Interacts with host microtubules. The chain is Protein ORF3 from Hepatitis E virus genotype 3 (isolate Human/United States/US2) (HEV-3).